A 272-amino-acid chain; its full sequence is Glutamate racemase (272 aa).

Substrate-binding positions include 10 to 11 (DS) and 42 to 43 (YG). Cysteine 74 serves as the catalytic Proton donor/acceptor. 75 to 76 (NT) serves as a coordination point for substrate. Cysteine 185 (proton donor/acceptor) is an active-site residue. 186–187 (TH) lines the substrate pocket.

Belongs to the aspartate/glutamate racemases family.

The catalysed reaction is L-glutamate = D-glutamate. It functions in the pathway cell wall biogenesis; peptidoglycan biosynthesis. Functionally, provides the (R)-glutamate required for cell wall biosynthesis. The protein is Glutamate racemase of Bacillus velezensis (strain DSM 23117 / BGSC 10A6 / LMG 26770 / FZB42) (Bacillus amyloliquefaciens subsp. plantarum).